The chain runs to 404 residues: Probable oxalate decarboxylase ARB_04859 (404 aa).

Residues Met-1 to Ala-17 form the signal peptide. Residues Phe-74 to Asp-215 enclose the Cupin type-1 1 domain. Residues His-117, His-119, Glu-123, and His-162 each contribute to the Mn(2+) site. N-linked (GlcNAc...) asparagine glycans are attached at residues Asn-226 and Asn-244. The 145-residue stretch at Phe-249–Glu-393 folds into the Cupin type-1 2 domain. The Mn(2+) site is built by His-296, His-298, Glu-303, and His-342. Asn-346 carries N-linked (GlcNAc...) asparagine glycosylation. The active-site Proton donor is Glu-357.

Requires Mn(2+) as cofactor.

Its subcellular location is the secreted. The enzyme catalyses oxalate + H(+) = formate + CO2. In terms of biological role, converts oxalate to formate and CO(2) in an O(2)-dependent reaction. Can also catalyze minor side reactions: oxalate oxidation to produce H(2)O(2), and oxalate-dependent, H(2)O(2)-independent dye oxidations. The polypeptide is Probable oxalate decarboxylase ARB_04859 (Arthroderma benhamiae (strain ATCC MYA-4681 / CBS 112371) (Trichophyton mentagrophytes)).